The sequence spans 567 residues: Protein ESMERALDA 1 (567 aa).

Positions 1-41 (MLAKNRLPGSGHTTPSPPASPRRSPRYRHGRSKAAAGSRFP) are disordered. The Cytoplasmic portion of the chain corresponds to 1-65 (MLAKNRLPGS…ILLSVLLRRQ (65 aa)). Basic residues predominate over residues 23-32 (RSPRYRHGRS). Residues 66-86 (GIFLFAPLIYISCMLLYMGTV) form a helical; Signal-anchor for type II membrane protein membrane-spanning segment. The Lumenal segment spans residues 87 to 567 (SFDVVPIIQR…TPESRPPPAT (481 aa)). Residues asparagine 121, asparagine 145, asparagine 184, and asparagine 238 are each glycosylated (N-linked (GlcNAc...) asparagine). Position 331–333 (331–333 (HLR)) interacts with substrate. N-linked (GlcNAc...) asparagine glycans are attached at residues asparagine 403, asparagine 419, asparagine 449, asparagine 538, and asparagine 554.

This sequence belongs to the glycosyltransferase GT106 family. As to expression, ubiquitous.

It is found in the golgi apparatus membrane. It participates in protein modification; protein glycosylation. Glycosyltransferase that plays a role in cell adhesion. This is Protein ESMERALDA 1 from Arabidopsis thaliana (Mouse-ear cress).